Consider the following 128-residue polypeptide: Thor profilin (128 aa).

It belongs to the Asgard profilin family.

The protein resides in the cytoplasm. Its subcellular location is the cytoskeleton. Its function is as follows. Has no profilin activity against rabbit actin. The polypeptide is Thor profilin (Thorarchaeota archaeon (strain AB_25)).